The following is a 287-amino-acid chain: tRNA (guanine(9)-N1)-methyltransferase (287 aa).

Residues 1-27 (MSDTSDLVDGKWQRLPPVPEGMSKSQW) form a disordered region. The SAM-dependent MTase TRM10-type domain maps to 79 to 272 (EPRVNRDQVA…SVIPSRKLDP (194 aa)). S-adenosyl-L-methionine contacts are provided by residues 179-180 (LT), Gly199, 203-207 (DKNRH), Cys211, Leu225, and 237-239 (KVL). Asp203 serves as the catalytic Proton acceptor. Residues 268–278 (RKLDPVKEKEQ) are compositionally biased toward basic and acidic residues. The disordered stretch occupies residues 268-287 (RKLDPVKEKEQQQQQQQQQQ).

The protein belongs to the class IV-like SAM-binding methyltransferase superfamily. TRM10 family. Monomer.

The protein resides in the cytoplasm. It localises to the nucleus. It carries out the reaction guanosine(9) in tRNA + S-adenosyl-L-methionine = N(1)-methylguanosine(9) in tRNA + S-adenosyl-L-homocysteine + H(+). Its function is as follows. S-adenosyl-L-methionine-dependent guanine N(1)-methyltransferase that catalyzes the formation of N(1)-methylguanine at position 9 (m1G9) in cytoplasmic tRNA. This Candida glabrata (strain ATCC 2001 / BCRC 20586 / JCM 3761 / NBRC 0622 / NRRL Y-65 / CBS 138) (Yeast) protein is tRNA (guanine(9)-N1)-methyltransferase.